The sequence spans 102 residues: MARYTYLVALVLLAICCQWGYCGAMAMPDEERYVRKEYNRDLLDWFNNVGVGQFSPGQVATLCRYPLILENSLGPSVPIRKRNSELINSLLSLPKNMNDAGK.

Residues 1–24 form the signal peptide; that stretch reads MARYTYLVALVLLAICCQWGYCGA. Residue Ala100 is modified to Alanine amide.

It belongs to the arthropod PDH family. As to expression, predominantly expressed in adult head. Expressed at higher level in males than in females. In adult brain, it is specifically expressed in the ventral lateral neurons (LNvs) as well as in 2-4 tritocerebral cells and 4-6 abdominal cells.

It is found in the secreted. Neuropeptide PDF is the main transmitter regulating circadian locomotor rhythms. Required to maintain behavioral rhythms under constant conditions by coordinating pacemaker interactions in the circadian system. Together with CCHa1, involved in regulating intensity and periodicity of daytime activity, possibly by modulating rhythmic expression of circadian protein PER/period in a subset of clock neurons, but not TIM/timeless. Acts on small and large ventral lateral neurons to control sleep and regulates the state transition from sleep to wake. This chain is Protein PDF (Pdf), found in Drosophila melanogaster (Fruit fly).